Consider the following 293-residue polypeptide: 33 kDa chaperonin (293 aa).

2 cysteine pairs are disulfide-bonded: Cys237-Cys239 and Cys271-Cys274.

It belongs to the HSP33 family. Post-translationally, under oxidizing conditions two disulfide bonds are formed involving the reactive cysteines. Under reducing conditions zinc is bound to the reactive cysteines and the protein is inactive.

It is found in the cytoplasm. Its function is as follows. Redox regulated molecular chaperone. Protects both thermally unfolding and oxidatively damaged proteins from irreversible aggregation. Plays an important role in the bacterial defense system toward oxidative stress. The chain is 33 kDa chaperonin from Haemophilus influenzae (strain ATCC 51907 / DSM 11121 / KW20 / Rd).